The chain runs to 398 residues: Putative defective protein IntQ (398 aa).

A Core-binding (CB) domain is found at 51 to 146; sequence LTIKELAEKF…NLNAVFQFGV (96 aa). One can recognise a Tyr recombinase domain in the interval 167–378; that stretch reads TIPDPLSREE…SENNNAQVAL (212 aa). Active-site residues include R202, K236, R331, and H354. The active-site O-(3'-phospho-DNA)-tyrosine intermediate is Y364.

This sequence belongs to the 'phage' integrase family.

Integrase is necessary for integration of the phage into the host genome by site-specific recombination. In conjunction with excisionase, integrase is also necessary for excision of the prophage from the host genome. The chain is Putative defective protein IntQ (intQ) from Escherichia coli (strain K12).